Here is a 266-residue protein sequence, read N- to C-terminus: Translation initiation factor 2 subunit alpha (266 aa).

One can recognise an S1 motif domain in the interval 12–83; that stretch reads GEILIATVKQ…RKGTVDVSLK (72 aa).

The protein belongs to the eIF-2-alpha family. Heterotrimer composed of an alpha, a beta and a gamma chain.

Its function is as follows. eIF-2 functions in the early steps of protein synthesis by forming a ternary complex with GTP and initiator tRNA. This chain is Translation initiation factor 2 subunit alpha, found in Saccharolobus islandicus (strain L.S.2.15 / Lassen #1) (Sulfolobus islandicus).